Consider the following 462-residue polypeptide: Probable Xaa-Pro aminopeptidase NECHADRAFT_60613 (462 aa).

Residues aspartate 259, aspartate 270, glutamate 393, and glutamate 433 each coordinate Mn(2+).

Belongs to the peptidase M24B family. It depends on Mn(2+) as a cofactor.

The catalysed reaction is Release of any N-terminal amino acid, including proline, that is linked to proline, even from a dipeptide or tripeptide.. Functionally, catalyzes the removal of a penultimate prolyl residue from the N-termini of peptides. This chain is Probable Xaa-Pro aminopeptidase NECHADRAFT_60613, found in Fusarium vanettenii (strain ATCC MYA-4622 / CBS 123669 / FGSC 9596 / NRRL 45880 / 77-13-4) (Fusarium solani subsp. pisi).